A 300-amino-acid chain; its full sequence is Junctional adhesion molecule A (300 aa).

The first 26 residues, 1 to 26, serve as a signal peptide directing secretion; sequence MGTEGKAGSKLLFLFTSMILGSLVQG. At 27 to 238 the chain is on the extracellular side; it reads KGSVYSPQTA…MEAVELNVGG (212 aa). 2 consecutive Ig-like V-type domains span residues 28–122 and 134–228; these read GSVY…GEVS and PTVS…EAVR. Cystine bridges form between C49-C108 and C152-C212. Residue N185 is glycosylated (N-linked (GlcNAc...) asparagine). A helical transmembrane segment spans residues 239 to 259; it reads IVAAVLVTLILLGLLIFGIWF. The Cytoplasmic portion of the chain corresponds to 260–300; that stretch reads AYSRGYFERTKKGTAPGKKVIYSQPSARSEGEFKQTSSFLV. 3 positions are modified to phosphoserine: S282, S285, and S288.

The protein belongs to the immunoglobulin superfamily. Interacts with the ninth PDZ domain of MPDZ. Interacts with the first PDZ domain of PARD3. The association between PARD3 and PARD6B probably disrupts this interaction. Interacts with ITGAL (via I-domain). Interacts with CD151. In terms of processing, N-glycosylated.

It localises to the cell junction. It is found in the tight junction. The protein resides in the cell membrane. Seems to play a role in epithelial tight junction formation. Appears early in primordial forms of cell junctions and recruits PARD3. The association of the PARD6-PARD3 complex may prevent the interaction of PARD3 with JAM1, thereby preventing tight junction assembly. Plays a role in regulating monocyte transmigration involved in integrity of epithelial barrier. Ligand for integrin alpha-L/beta-2 involved in memory T-cell and neutrophil transmigration. The sequence is that of Junctional adhesion molecule A (F11r) from Rattus norvegicus (Rat).